The primary structure comprises 374 residues: Potassium channel subfamily K member 9 (374 aa).

Over 1-8 the chain is Cytoplasmic; it reads MKRQNVRT. The helical transmembrane segment at 9–29 threads the bilayer; that stretch reads LSLIVCTFTYLLVGAAVFDAL. Topologically, residues 30–88 are extracellular; the sequence is ESDHEMREEEKLKAEEIRIKGKYNISSEDYRQLELVILQSEPHRAGVQWKFAGSFYFAI. The N-linked (GlcNAc...) asparagine glycan is linked to Asn53. Residues 89-101 constitute an intramembrane region (pore-forming); it reads TVITTIGYGHAAP. Residues Thr93, Ile94, Gly95, and Tyr96 each contribute to the K(+) site. Residues 93–98 are selectivity filter 1; that stretch reads TIGYGH. At 102–107 the chain is on the extracellular side; it reads GTDAGK. Residues 108-128 traverse the membrane as a helical segment; the sequence is AFCMFYAVLGIPLTLVMFQSL. Over 129-158 the chain is Cytoplasmic; sequence GERMNTFVRYLLKRIKKCCGMRNTDVSMEN. Residues 159 to 179 form a helical membrane-spanning segment; that stretch reads MVTVGFFSCMGTLCIGAAAFS. Topologically, residues 180–194 are extracellular; that stretch reads QCEEWSFFHAYYYCF. An intramembrane region (pore-forming) is located at residues 195–207; sequence ITLTTIGFGDYVA. K(+) is bound by residues Thr199, Ile200, Gly201, and Phe202. The interval 199–204 is selectivity filter 2; it reads TIGFGD. Residues 208 to 218 are Extracellular-facing; it reads LQTKGALQKKP. The helical transmembrane segment at 219 to 239 threads the bilayer; the sequence is LYVAFSFMYILVGLTVIGAFL. The Cytoplasmic segment spans residues 240–374; it reads NLVVLRFLTM…QRLMKRRKSV (135 aa). The tract at residues 243–248 is X-gate; it reads VLRFLT.

This sequence belongs to the two pore domain potassium channel (TC 1.A.1.8) family. Homodimer. Heterodimer with KCNK1. Heterodimer with KCNK3. As to expression, mainly found in the cerebellum. Also found in adrenal gland, kidney and lung.

It localises to the cell membrane. Its subcellular location is the mitochondrion inner membrane. It is found in the cell projection. The protein localises to the dendrite. It carries out the reaction K(+)(in) = K(+)(out). The catalysed reaction is Na(+)(in) = Na(+)(out). Inhibited by extracellular acidification adopting a nonconductive conformation at pH 6.0. Inhibited by phorbol 12-myristate 13-acetate (PMA). Its function is as follows. K(+) channel that conducts voltage-dependent outward rectifying currents upon membrane depolarization. Voltage sensing is coupled to K(+) electrochemical gradient in an 'ion flux gating' mode where outward but not inward ion flow opens the gate. Changes ion selectivity and becomes permeable to Na(+) ions in response to extracellular acidification. Protonation of the pH sensor His-98 stabilizes C-type inactivation conformation likely converting the channel from outward K(+)-conducting, to inward Na(+)-conducting to nonconductive state. Homo- and heterodimerizes to form functional channels with distinct regulatory and gating properties. Allows K(+) currents with fast-gating kinetics important for the repolarization and hyperpolarization phases of action potentials. In granule neurons, hyperpolarizes the resting membrane potential to limit intrinsic neuronal excitability, but once the action potential threshold is reached, supports high-frequency action potential firing and increased neuronal excitability. Homomeric and/or heteromeric KCNK3:KCNK9 channels operate in cerebellar granule cells, whereas heteromeric KCNK1:KCNK9 enables currents in hippocampal dentate gyrus granule neurons. Dispensable for central chemosensory respiration i.e. breathing controlled by brainstem CO2/pH, it rather conducts pH-sensitive currents and controls the firing rate of serotonergic raphe neurons involved in potentiation of the respiratory chemoreflex. In retinal ganglion cells, mediates outward currents that regulate action potentials in response to acidification of the synaptic cleft. Involved in transmission of image-forming and nonimage-forming visual information in the retina. In adrenal gland, contributes to the maintenance of a hyperpolarized resting membrane potential of aldosterone-producing cells at zona glomerulosa and limits aldosterone release as part of a regulatory mechanism that controls arterial blood pressure and electrolyte homeostasis. This Homo sapiens (Human) protein is Potassium channel subfamily K member 9.